We begin with the raw amino-acid sequence, 133 residues long: MRHYEIVFMVHPDQSEQVNGMIERYTASITEAGGTVHRLEDWGRRQLAYPINKLHKAHYVLMNIEAGQNVIDDLENAFRFNDSVIRNMIMRTKTAVTEVSVVAKAREERVERAPRAPRPEVKAEPEAEATAEA.

Residues 106–125 (REERVERAPRAPRPEVKAEP) are compositionally biased toward basic and acidic residues. Residues 106 to 133 (REERVERAPRAPRPEVKAEPEAEATAEA) are disordered.

It belongs to the bacterial ribosomal protein bS6 family.

Functionally, binds together with bS18 to 16S ribosomal RNA. The sequence is that of Small ribosomal subunit protein bS6 from Psychromonas ingrahamii (strain DSM 17664 / CCUG 51855 / 37).